We begin with the raw amino-acid sequence, 771 residues long: Transducin-like enhancer protein 3-B (771 aa).

The tract at residues M1–Q141 is q domain. Low complexity predominate over residues Q137 to H148. Disordered stretches follow at residues Q137–S174 and H196–L360. The tract at residues H142–N209 is GP domain. Positions H196–S206 are enriched in basic and acidic residues. A compositionally biased stretch (low complexity) spans S207–S217. The interval N210–P278 is ccN domain. Basic and acidic residues-rich tracts occupy residues R219–D257 and G282–A293. The Nuclear localization signal signature appears at K235–R238. Residues P279–V451 form an SP domain region. Low complexity predominate over residues P294 to S309. 2 positions are modified to phosphoserine: S296 and S299. Basic and acidic residues predominate over residues K310–K319. Residues S320–P332 show a composition bias toward polar residues. WD repeat units follow at residues S483–P521, N529–K568, S573–Q612, G615–Q654, D656–L695, L697–Q736, and K738–Y771.

It belongs to the WD repeat Groucho/TLE family. In terms of tissue distribution, at gastrulation, expression is absent within the axial mesoderm. After gastrulation is complete, expressed in the presomitic mesoderm, but expression in the tailbud doesn't begin until the six to seven somite stage, after which it becomes abundant. Expression is abundant throughout somitogenesis within the posterior half of the somites, but is absent from older somites. Also expressed in a dynamic manner within the neural plate.

The protein localises to the nucleus. In terms of biological role, transcriptional corepressor that binds to a number of transcription factors. Inhibits the transcriptional activation mediated by CTNNB1 and TCF family members in Wnt signaling. The effects of full-length TLE family members may be modulated by association with dominant-negative AES. This Danio rerio (Zebrafish) protein is Transducin-like enhancer protein 3-B.